The sequence spans 225 residues: Holliday junction branch migration complex subunit RuvA (225 aa).

The interval 1–71 is domain I; that stretch reads MISWISGELV…EDSDLLFGFS (71 aa). The tract at residues 72–150 is domain II; the sequence is SKDQKNFFIE…NELKIQEEKS (79 aa). The flexible linker stretch occupies residues 151-161; that stretch reads KDEFHIKDNKI. The tract at residues 161 to 225 is domain III; sequence INKIVSDIEL…LDNDSSNIVR (65 aa).

This sequence belongs to the RuvA family. In terms of assembly, homotetramer. Forms an RuvA(8)-RuvB(12)-Holliday junction (HJ) complex. HJ DNA is sandwiched between 2 RuvA tetramers; dsDNA enters through RuvA and exits via RuvB. An RuvB hexamer assembles on each DNA strand where it exits the tetramer. Each RuvB hexamer is contacted by two RuvA subunits (via domain III) on 2 adjacent RuvB subunits; this complex drives branch migration. In the full resolvosome a probable DNA-RuvA(4)-RuvB(12)-RuvC(2) complex forms which resolves the HJ.

It localises to the cytoplasm. The RuvA-RuvB-RuvC complex processes Holliday junction (HJ) DNA during genetic recombination and DNA repair, while the RuvA-RuvB complex plays an important role in the rescue of blocked DNA replication forks via replication fork reversal (RFR). RuvA specifically binds to HJ cruciform DNA, conferring on it an open structure. The RuvB hexamer acts as an ATP-dependent pump, pulling dsDNA into and through the RuvAB complex. HJ branch migration allows RuvC to scan DNA until it finds its consensus sequence, where it cleaves and resolves the cruciform DNA. This Prochlorococcus marinus (strain MIT 9312) protein is Holliday junction branch migration complex subunit RuvA.